The primary structure comprises 345 residues: Dihydroorotate dehydrogenase (quinone) (345 aa).

Residues 65–69 and T89 each bind FMN; that span reads AGLDK. Substrate is bound at residue K69. A substrate-binding site is contributed by 114 to 118; sequence NRLGF. FMN-binding residues include N146 and N179. A substrate-binding site is contributed by N179. S182 serves as the catalytic Nucleophile. N184 serves as a coordination point for substrate. Residues K224 and T252 each coordinate FMN. 253–254 lines the substrate pocket; it reads NT. Residues G275, G304, and 325–326 each bind FMN; that span reads YT.

This sequence belongs to the dihydroorotate dehydrogenase family. Type 2 subfamily. As to quaternary structure, monomer. The cofactor is FMN.

The protein resides in the cell membrane. The enzyme catalyses (S)-dihydroorotate + a quinone = orotate + a quinol. It participates in pyrimidine metabolism; UMP biosynthesis via de novo pathway; orotate from (S)-dihydroorotate (quinone route): step 1/1. Functionally, catalyzes the conversion of dihydroorotate to orotate with quinone as electron acceptor. This Leptothrix cholodnii (strain ATCC 51168 / LMG 8142 / SP-6) (Leptothrix discophora (strain SP-6)) protein is Dihydroorotate dehydrogenase (quinone).